Reading from the N-terminus, the 617-residue chain is Neopullulanase SusA (617 aa).

The signal sequence occupies residues Met-1–Ala-22. Positions 138, 143, 144, 164, and 166 each coordinate Ca(2+). Residues Asp-331 and Glu-360 contribute to the active site.

It belongs to the glycosyl hydrolase 13 family. Requires Ca(2+) as cofactor.

The protein localises to the periplasm. The catalysed reaction is Hydrolysis of pullulan to panose (6-alpha-D-glucosylmaltose).. The protein operates within glycan degradation; starch degradation. Its function is as follows. Neopullulanase that cleaves 1,4-alpha-glucosidic linkages in starch to produce disaccharides or trisaccharides in starch degradation. This is Neopullulanase SusA (susA) from Bacteroides thetaiotaomicron (strain ATCC 29148 / DSM 2079 / JCM 5827 / CCUG 10774 / NCTC 10582 / VPI-5482 / E50).